A 177-amino-acid chain; its full sequence is Nucleoside triphosphate/diphosphate phosphatase (177 aa).

The Proton donor role is filled by Arg-23. Mg(2+)-binding residues include Asn-87, Asp-103, Asp-105, Asp-107, Asp-120, and Glu-123.

The protein belongs to the Ntdp family. Mg(2+) serves as cofactor.

It carries out the reaction a ribonucleoside 5'-triphosphate + H2O = a ribonucleoside 5'-diphosphate + phosphate + H(+). It catalyses the reaction a ribonucleoside 5'-diphosphate + H2O = a ribonucleoside 5'-phosphate + phosphate + H(+). Functionally, has nucleoside phosphatase activity towards nucleoside triphosphates and nucleoside diphosphates. This chain is Nucleoside triphosphate/diphosphate phosphatase, found in Streptococcus pneumoniae serotype 19F (strain G54).